The primary structure comprises 445 residues: 3-phosphoshikimate 1-carboxyvinyltransferase (445 aa).

Residues Lys-28, Ser-29, and Arg-33 each coordinate 3-phosphoshikimate. Lys-28 is a binding site for phosphoenolpyruvate. Gly-101 and Arg-129 together coordinate phosphoenolpyruvate. Ser-175, Gln-177, Asp-328, and Lys-355 together coordinate 3-phosphoshikimate. Gln-177 contributes to the phosphoenolpyruvate binding site. Asp-328 (proton acceptor) is an active-site residue. Positions 359 and 402 each coordinate phosphoenolpyruvate.

It belongs to the EPSP synthase family. As to quaternary structure, monomer.

The protein resides in the cytoplasm. The catalysed reaction is 3-phosphoshikimate + phosphoenolpyruvate = 5-O-(1-carboxyvinyl)-3-phosphoshikimate + phosphate. Its pathway is metabolic intermediate biosynthesis; chorismate biosynthesis; chorismate from D-erythrose 4-phosphate and phosphoenolpyruvate: step 6/7. Catalyzes the transfer of the enolpyruvyl moiety of phosphoenolpyruvate (PEP) to the 5-hydroxyl of shikimate-3-phosphate (S3P) to produce enolpyruvyl shikimate-3-phosphate and inorganic phosphate. The protein is 3-phosphoshikimate 1-carboxyvinyltransferase of Bradyrhizobium sp. (strain BTAi1 / ATCC BAA-1182).